A 162-amino-acid polypeptide reads, in one-letter code: uncharacterized protein (162 aa).

To R.meliloti R02472.

This is an uncharacterized protein from Escherichia coli (strain K12).